Consider the following 42-residue polypeptide: uncharacterized protein (42 aa).

Its subcellular location is the cytoplasm. This is an uncharacterized protein from Escherichia coli (strain K12).